The primary structure comprises 284 residues: Bifunctional protein FolD (284 aa).

NADP(+)-binding positions include 165–167 (GRS), Ser-190, and Ile-231.

The protein belongs to the tetrahydrofolate dehydrogenase/cyclohydrolase family. In terms of assembly, homodimer.

The catalysed reaction is (6R)-5,10-methylene-5,6,7,8-tetrahydrofolate + NADP(+) = (6R)-5,10-methenyltetrahydrofolate + NADPH. The enzyme catalyses (6R)-5,10-methenyltetrahydrofolate + H2O = (6R)-10-formyltetrahydrofolate + H(+). The protein operates within one-carbon metabolism; tetrahydrofolate interconversion. Functionally, catalyzes the oxidation of 5,10-methylenetetrahydrofolate to 5,10-methenyltetrahydrofolate and then the hydrolysis of 5,10-methenyltetrahydrofolate to 10-formyltetrahydrofolate. This is Bifunctional protein FolD from Streptococcus thermophilus (strain ATCC BAA-491 / LMD-9).